The primary structure comprises 196 residues: Transmembrane protein 126A (196 aa).

The Mitochondrial matrix segment spans residues 1–34; that stretch reads MENHKSNNTKENITIVDISRKINQLPEAERNLLE. A helical membrane pass occupies residues 35–55; it reads HGSVYVGLNAALCGLIANSLF. The Mitochondrial intermembrane segment spans residues 56–57; the sequence is RR. Residues 58 to 78 traverse the membrane as a helical segment; that stretch reads ILNVTKARIAAGLPMAWIPFL. The Mitochondrial matrix segment spans residues 79-107; that stretch reads TTDITYRCFVSFPLNTGDLDCETCTITRS. A helical membrane pass occupies residues 108–128; that stretch reads GLIGLVIGGLYPVFLAIPVNG. Topologically, residues 129–159 are mitochondrial intermembrane; it reads GLAARYQSALLPHKGNILSYWIRTSKPVFRK. The chain crosses the membrane as a helical span at residues 160 to 176; that stretch reads MLFPIMLQTMFSAYLGS. Residues 177-196 lie on the Mitochondrial matrix side of the membrane; sequence EQYKLLIKALQLSEPGKEIH.

This sequence belongs to the TMEM126 family. Interacts with OXA1L; promoting cotranslational quality control in mitochondria.

The protein localises to the mitochondrion inner membrane. Functionally, protein required for the cotranslational protein quality control in the inner membrane of the mitochondria. Associates with newly synthesized polypeptides and may act as a chaperone that cooperates with OXA1L for the insertion of newly synthesized mitochondrial proteins into the inner membrane. Required for the assembly of the ND4 module of mitochondrial complex I. In Pongo abelii (Sumatran orangutan), this protein is Transmembrane protein 126A (TMEM126A).